The sequence spans 461 residues: Ribitol-5-phosphate transferase FKTN (461 aa).

At 1-7 the chain is on the cytoplasmic side; sequence MSRINKN. Positions 6 to 27 are required and sufficient for interaction with POMGNT1; the sequence is KNVVLALLTLTSSAFLLFQLYY. The chain crosses the membrane as a helical; Signal-anchor for type II membrane protein span at residues 8–28; it reads VVLALLTLTSSAFLLFQLYYY. Residues 29-461 are Lumenal-facing; that stretch reads KHYLSTRNGA…SEWDEVIQLY (433 aa). N-linked (GlcNAc...) asparagine glycosylation occurs at N92.

The protein belongs to the LicD transferase family. Forms a complex composed of FKTN/fukutin, FKRP and RXYLT1/TMEM5. Interacts (via transmembrane domain) with POMGNT1; the interaction is direct and is required for normal POMGNT1 location in Golgi membranes. Expressed in the retina (at protein level).

The protein resides in the golgi apparatus membrane. Its subcellular location is the cytoplasm. It localises to the nucleus. It catalyses the reaction 3-O-[beta-D-GalNAc-(1-&gt;3)-beta-D-GlcNAc-(1-&gt;4)-(O-6-P-alpha-D-Man)]-Thr-[protein] + CDP-L-ribitol = 3-O-[Rib-ol-P-3-beta-D-GalNAc-(1-&gt;3)-beta-D-GlcNAc-(1-&gt;4)-(O-6-P-alpha-D-Man)]-Thr-[protein] + CMP + H(+). It participates in protein modification; protein glycosylation. Functionally, catalyzes the transfer of CDP-ribitol to the distal N-acetylgalactosamine of the phosphorylated O-mannosyl trisaccharide (N-acetylgalactosamine-beta-3-N-acetylglucosamine-beta-4-(phosphate-6-)mannose), a carbohydrate structure present in alpha-dystroglycan (DAG1). This constitutes the first step in the formation of the ribitol 5-phosphate tandem repeat which links the phosphorylated O-mannosyl trisaccharide to the ligand binding moiety composed of repeats of 3-xylosyl-alpha-1,3-glucuronic acid-beta-1. May interact with and reinforce a large complex encompassing the outside and inside of muscle membranes. Could be involved in brain development. The sequence is that of Ribitol-5-phosphate transferase FKTN from Macaca fascicularis (Crab-eating macaque).